The following is a 503-amino-acid chain: Probable Xaa-Pro aminopeptidase TSTA_094700 (503 aa).

Asp277, Asp288, Glu428, and Glu467 together coordinate Mn(2+).

Belongs to the peptidase M24B family. The cofactor is Mn(2+).

It catalyses the reaction Release of any N-terminal amino acid, including proline, that is linked to proline, even from a dipeptide or tripeptide.. Catalyzes the removal of a penultimate prolyl residue from the N-termini of peptides. The polypeptide is Probable Xaa-Pro aminopeptidase TSTA_094700 (Talaromyces stipitatus (strain ATCC 10500 / CBS 375.48 / QM 6759 / NRRL 1006) (Penicillium stipitatum)).